A 145-amino-acid polypeptide reads, in one-letter code: D-aminoacyl-tRNA deacylase (145 aa).

The short motif at 137–138 is the Gly-cisPro motif, important for rejection of L-amino acids element; the sequence is GP.

Belongs to the DTD family. Homodimer.

It localises to the cytoplasm. The enzyme catalyses glycyl-tRNA(Ala) + H2O = tRNA(Ala) + glycine + H(+). It carries out the reaction a D-aminoacyl-tRNA + H2O = a tRNA + a D-alpha-amino acid + H(+). Functionally, an aminoacyl-tRNA editing enzyme that deacylates mischarged D-aminoacyl-tRNAs. Also deacylates mischarged glycyl-tRNA(Ala), protecting cells against glycine mischarging by AlaRS. Acts via tRNA-based rather than protein-based catalysis; rejects L-amino acids rather than detecting D-amino acids in the active site. By recycling D-aminoacyl-tRNA to D-amino acids and free tRNA molecules, this enzyme counteracts the toxicity associated with the formation of D-aminoacyl-tRNA entities in vivo and helps enforce protein L-homochirality. The protein is D-aminoacyl-tRNA deacylase of Lactobacillus acidophilus (strain ATCC 700396 / NCK56 / N2 / NCFM).